Consider the following 824-residue polypeptide: MLSTLSFLIHGEQNVQQCQTISDLECLYLINKNQPLRDSNGNPLTAHELTDDLNERLVTLKLEAFRPVVSEVLDQLEEQDDALHYFVLVATSRLSDEDFENSLKEVSLSQKLMVRIDGEYKYRLYSKPIVRNNIPQLAWDISPALRTRKVAEKDEISPPNNTANVYPVDDWGLISREFRSILSCEELILSAREGQSIEFFHLDNQGFYRNLLDMHRGISSDLFQIDGDYHFYQSRPCRVQEWNLTTTRIILQKHIFIANQLAEAIQKLKNIFVTGTDNSIRLMMQKYLIDEQQIFFEYFEYIFDESASTSYNFQSIVENLPKLNIHDASCRFQICDDIFEIVSAHYHVIREMIQVVGNINDYSPIRLNEMSFTGSQSAPQFYAKRMWRRLNVELIRFIVNKLAEMLTTPDAELMELLTDAGDAKLIKDPSIWQRLNPLQMESSLCIDEDLANRVADLIIGYQFFVNDKKSKSQKLDEKTFAKSDIQDAEELELFAKTPEFEIIIQKILDRVDVNSVTEESEELTICINKLLEQIPTTTLVEKYSQIVLEKSIKFFEFLKLFFTSAYIHMRHSTFLNRYVLDTLEREKMLKQGYDPVFLRTIGYNERSTNEDSLLVVTPPEPLNVFVSKSVTDIYSQVFTVLRMLHTALNEVLETRNSETLTREPRLRYAFFHMNTTIFAIRKNMLTLIEQSYEAFMKTLDFKSKPDQRSSHELLNVCYRAHRKFIRDVAGALMLKSNAGTTGRIIRLMVGSVSQASNACVNGDAVGAEKFYQQFQNNLLIFLDQCRLDHIRYPLYRSLEIGSEETDGRRSLNSSYSDDLSCRSY.

This is an uncharacterized protein from Caenorhabditis elegans.